The following is a 1142-amino-acid chain: Envelopment polyprotein (1142 aa).

Residues 1-21 (MSKFCLCLSLLGVLLLQVCDT) form the signal peptide. Over 22–489 (RSLLELKIEC…LCVPGIHGWS (468 aa)) the chain is Lumenal. Disulfide bonds link Cys31–Cys156, Cys65–Cys162, Cys114–Cys133, Cys138–Cys143, Cys180–Cys190, and Cys215–Cys253. A glycan (N-linked (GlcNAc...) asparagine; by host) is linked at Asn139. Residue Asn353 is glycosylated (N-linked (GlcNAc...) asparagine; by host). 4 cysteine pairs are disulfide-bonded: Cys382/Cys441, Cys386/Cys395, Cys411/Cys430, and Cys458/Cys481. N-linked (GlcNAc...) asparagine; by host glycosylation occurs at Asn405. Residues 490–510 (TIALLATFCFGWLLIPIISLV) form a helical membrane-spanning segment. At 511 to 633 (SIKIMLLFAY…LSVFRYRSRC (123 aa)) the chain is on the cytoplasmic side. The tract at residues 522 to 539 (CSKYSNDSKFRLLIEKVK) is binding to the ribonucleoprotein. CCHC-type zinc fingers lie at residues 551 to 571 (CEVCQQECEMAKELESHKKSC) and 576 to 597 (CPYCMNPTESTESALQAHFKVC). Binding to the ribonucleoprotein regions lie at residues 594 to 611 (FKVCKLTTRFQENLRKSL), 598 to 609 (KLTTRFQENLRK), and 617 to 631 (KRGCYRTLSVFRYRS). The ITAM domain maps to 617–640 (KRGCYRTLSVFRYRSRCFVGLVWC). The YxxL motif lies at 621–624 (YRTL). Residues 634-654 (FVGLVWCILLVLELVIWAASA) form a helical membrane-spanning segment. The Lumenal portion of the chain corresponds to 655-1110 (DTVEIKTGWT…EWLMGILSGN (456 aa)). 8 cysteine pairs are disulfide-bonded: Cys741–Cys776, Cys745–Cys783, Cys757–Cys890, Cys771–Cys901, Cys786–Cys909, Cys812–Cys821, Cys829–Cys838, and Cys869–Cys873. Residues 763–783 (YEFETGWGCNPGDCPGVGTGC) are fusion loop. The N-linked (GlcNAc...) asparagine; by host glycan is linked to Asn933. 5 disulfide bridges follow: Cys975–Cys1005, Cys998–Cys1050, Cys1015–Cys1020, Cys1051–Cys1056, and Cys1090–Cys1094. Residues 1111-1131 (WMVVAVLVVLLILSIFLFSLC) form a helical membrane-spanning segment. Residues 1127–1142 (LFSLCCPRRVVHKKSS) are binding to the ribonucleoprotein. The Cytoplasmic portion of the chain corresponds to 1132-1142 (CPRRVVHKKSS).

It belongs to the hantavirus envelope glycoprotein family. In terms of assembly, homodimer. Homotetramer; forms heterotetrameric Gn-Gc spikes in the pre-fusion conformation. Interacts (via C-terminus) with the nucleoprotein. Interacts with host TUFM; this interaction contributes to the virus-induced degradation of mitochondria by autophagy, which leads to degradation of host MAVS and inhibition of type I interferon (IFN) responses. Interacts with host MAP1LC3B; this interaction contributes to the virus-induced degradation of mitochondria by autophagy, which leads to degradation of host MAVS and inhibition of type I interferon (IFN) responses. As to quaternary structure, homodimer. Homotetramer; forms heterotetrameric Gn-Gc spikes in the pre-fusion conformation. Homotrimer; forms homotrimer in the post-fusion conformation at acidic pH. Interacts (via C-terminus) with the nucleoprotein. In terms of processing, envelope polyprotein precursor is quickly cleaved in vivo just after synthesis, presumably by host signal peptidase.

The protein localises to the virion membrane. Its subcellular location is the host cell surface. It is found in the host Golgi apparatus membrane. It localises to the host endoplasmic reticulum membrane. The protein resides in the host mitochondrion. Functionally, forms homotetramers with glycoprotein C at the surface of the virion. Attaches the virion to host cell receptors including integrin alpha5/ITGB1. This attachment induces virion internalization predominantly through clathrin-dependent endocytosis. Mediates the assembly and budding of infectious virus particles through its interaction with the nucleocapsid protein and the viral genome. May dysregulate normal immune and endothelial cell responses through an ITAM motif. Translocates to mitochondria, binds to host TUFM and recruits MAP1LC3B. These interactions induce mitochondrial autophagy and therefore destruction of host MAVS leading to inhibition of type I interferon (IFN) responses. Concomitant breakdown of glycoprotein N is apparently prevented by the nucleoprotein that may inhibit Gn-stimulated autophagosome-lysosome fusion. Interacts with the viral genomic RNA. Forms homotetramers with glycoprotein N at the surface of the virion. Attaches the virion to host cell receptors including integrin ITGAV/ITGB3. This attachment induces virion internalization predominantly through clathrin-dependent endocytosis. Class II fusion protein that promotes fusion of viral membrane with host endosomal membrane after endocytosis of the virion. This is Envelopment polyprotein (GP) from Microtus pennsylvanicus (Meadow vole).